The chain runs to 660 residues: DNA mismatch repair protein MutL (660 aa).

It belongs to the DNA mismatch repair MutL/HexB family.

In terms of biological role, this protein is involved in the repair of mismatches in DNA. It is required for dam-dependent methyl-directed DNA mismatch repair. May act as a 'molecular matchmaker', a protein that promotes the formation of a stable complex between two or more DNA-binding proteins in an ATP-dependent manner without itself being part of a final effector complex. This is DNA mismatch repair protein MutL from Streptococcus equi subsp. equi (strain 4047).